A 683-amino-acid polypeptide reads, in one-letter code: uncharacterized protein (683 aa).

2 stretches are compositionally biased toward polar residues: residues 407–420 (FETSTNKSSPTYTP) and 512–529 (EGSSPKPQTTAAKTSSEA). Disordered stretches follow at residues 407–427 (FETSTNKSSPTYTPTPAKLST), 509–556 (FSRE…SSTV), and 621–648 (HNTSMPNPHHNSVKPEDHPHHPEGDHPD). Residues 531 to 542 (LPPLLTTTPTPT) show a composition bias toward low complexity. 2 stretches are compositionally biased toward polar residues: residues 543-556 (NTEKSQSTFASSTV) and 621-630 (HNTSMPNPHH). Basic and acidic residues predominate over residues 633–648 (VKPEDHPHHPEGDHPD). The chain crosses the membrane as a helical span at residues 657-677 (IWLLPIAGTIFALVALVIVNI).

The protein resides in the host membrane. This is an uncharacterized protein from Alcelaphine herpesvirus 1 (strain C500) (AlHV-1).